Here is a 376-residue protein sequence, read N- to C-terminus: UDP-N-acetylglucosamine--N-acetylmuramyl-(pentapeptide) pyrophosphoryl-undecaprenol N-acetylglucosamine transferase (376 aa).

Residues 11-13 (TGG), Asn117, Arg160, Ser208, and Gln310 each bind UDP-N-acetyl-alpha-D-glucosamine.

The protein belongs to the glycosyltransferase 28 family. MurG subfamily.

The protein resides in the cell inner membrane. It catalyses the reaction di-trans,octa-cis-undecaprenyl diphospho-N-acetyl-alpha-D-muramoyl-L-alanyl-D-glutamyl-meso-2,6-diaminopimeloyl-D-alanyl-D-alanine + UDP-N-acetyl-alpha-D-glucosamine = di-trans,octa-cis-undecaprenyl diphospho-[N-acetyl-alpha-D-glucosaminyl-(1-&gt;4)]-N-acetyl-alpha-D-muramoyl-L-alanyl-D-glutamyl-meso-2,6-diaminopimeloyl-D-alanyl-D-alanine + UDP + H(+). The protein operates within cell wall biogenesis; peptidoglycan biosynthesis. Its function is as follows. Cell wall formation. Catalyzes the transfer of a GlcNAc subunit on undecaprenyl-pyrophosphoryl-MurNAc-pentapeptide (lipid intermediate I) to form undecaprenyl-pyrophosphoryl-MurNAc-(pentapeptide)GlcNAc (lipid intermediate II). The protein is UDP-N-acetylglucosamine--N-acetylmuramyl-(pentapeptide) pyrophosphoryl-undecaprenol N-acetylglucosamine transferase of Rickettsia conorii (strain ATCC VR-613 / Malish 7).